A 162-amino-acid polypeptide reads, in one-letter code: Large ribosomal subunit protein uL10 (162 aa).

Belongs to the universal ribosomal protein uL10 family. As to quaternary structure, part of the ribosomal stalk of the 50S ribosomal subunit. The N-terminus interacts with L11 and the large rRNA to form the base of the stalk. The C-terminus forms an elongated spine to which L12 dimers bind in a sequential fashion forming a multimeric L10(L12)X complex.

In terms of biological role, forms part of the ribosomal stalk, playing a central role in the interaction of the ribosome with GTP-bound translation factors. In Vibrio vulnificus (strain CMCP6), this protein is Large ribosomal subunit protein uL10.